The primary structure comprises 86 residues: Large ribosomal subunit protein bL27 (86 aa).

The segment covering Met-1 to Thr-10 has biased composition (gly residues). Residues Met-1 to Leu-21 are disordered.

It belongs to the bacterial ribosomal protein bL27 family.

The chain is Large ribosomal subunit protein bL27 from Ralstonia pickettii (strain 12J).